A 385-amino-acid polypeptide reads, in one-letter code: Photoreceptor ankyrin repeat protein (385 aa).

ANK repeat units follow at residues 17–46 (CNLK…SPEE), 53–83 (NGRT…DVNQ), 87–116 (DGNT…GLDL), 122–151 (RGLT…DLSS), and 156–190 (RGKT…QLSL). The segment at 270–385 (LGTRGKSVPE…GGLGQAGGSK (116 aa)) is disordered. Pro residues predominate over residues 284–297 (APPPPPEPHPPQQV). Residues 304–326 (APNQSPQSMFSQWLQSRDSTRSQ) show a composition bias toward polar residues. Basic and acidic residues predominate over residues 361-373 (FQERKKKEEETEP). The span at 374-385 (RGGGLGQAGGSK) shows a compositional bias: gly residues.

Isoform 1: Expressed predominantly in the retina. Isoform 2: Expressed in the pineal gland.

It localises to the cytoplasm. The protein resides in the cytosol. The protein localises to the nucleus. Functionally, acts as a transcriptional repressor for CRX-activated photoreceptor gene regulation. This chain is Photoreceptor ankyrin repeat protein, found in Mus musculus (Mouse).